We begin with the raw amino-acid sequence, 238 residues long: Ras association domain-containing protein 3 (238 aa).

Residue serine 2 is modified to N-acetylserine. The disordered stretch occupies residues 26–48 (RAPQGKPRSGQQDVEKEKETHSY). Basic and acidic residues predominate over residues 38 to 48 (DVEKEKETHSY). In terms of domain architecture, Ras-associating spans 79–186 (YTGFIKVQME…TLSFVLREHE (108 aa)). The SARAH domain occupies 187–234 (IGEWEAFSLPELQNFLRILDKEEDEQLQNLKRRYTAYRQKLEEALREV).

Widely expressed.

The protein resides in the cytoplasm. It is found in the cytoskeleton. The sequence is that of Ras association domain-containing protein 3 (RASSF3) from Homo sapiens (Human).